We begin with the raw amino-acid sequence, 382 residues long: Beta-lactamase CMY-1 (382 aa).

A signal peptide spans 1–23; the sequence is MQQRQSILWGAVATLMWAGLAHA. Serine 88 functions as the Acyl-ester intermediate in the catalytic mechanism. A beta-lactam-binding residues include serine 88, glutamine 144, tyrosine 174, asparagine 176, and asparagine 363.

It belongs to the class-C beta-lactamase family.

It catalyses the reaction a beta-lactam + H2O = a substituted beta-amino acid. With respect to regulation, inhibited by the beta-lactamase-blocking agent sulbactam. Class C beta-lactamase which confers resistance to penicillins and cephalosporins. Has benzylpenicillin- and cefalotin-hydrolyzing activities. Has weak cefuroxime, cefotaxime, cefoxitin, imipenem and oxacillin-hydrolyzing activities. This Klebsiella pneumoniae protein is Beta-lactamase CMY-1.